The sequence spans 461 residues: Phytase PHO112 (461 aa).

3 disulfide bridges follow: C62-C384, C261-C274, and C404-C412. Positions 72, 73, 76, and 79 each coordinate 1D-myo-inositol hexakisphosphate. H73 (nucleophile) is an active-site residue. N-linked (GlcNAc...) asparagine glycosylation is found at N97 and N157. Position 169 (R169) interacts with 1D-myo-inositol hexakisphosphate. N229 and N248 each carry an N-linked (GlcNAc...) asparagine glycan. K293 is a binding site for 1D-myo-inositol hexakisphosphate. N302 and N313 each carry an N-linked (GlcNAc...) asparagine glycan. Residues H334 and D335 each coordinate 1D-myo-inositol hexakisphosphate. N437 and N452 each carry an N-linked (GlcNAc...) asparagine glycan.

Belongs to the histidine acid phosphatase family. As to quaternary structure, monomer.

It localises to the secreted. The catalysed reaction is 1D-myo-inositol hexakisphosphate + H2O = 1D-myo-inositol 1,2,4,5,6-pentakisphosphate + phosphate. The enzyme catalyses 1D-myo-inositol 1,2,4,5,6-pentakisphosphate + H2O = 1D-myo-inositol 1,2,5,6-tetrakisphosphate + phosphate. It carries out the reaction 1D-myo-inositol 1,2,5,6-tetrakisphosphate + H2O = 1D-myo-inositol 1,2,6-trisphosphate + phosphate. It catalyses the reaction 1D-myo-inositol 1,2,6-trisphosphate + H2O = 1D-myo-inositol 1,2-bisphosphate + phosphate. The catalysed reaction is 1D-myo-inositol 1,2-bisphosphate + H2O = 1D-myo-inositol 2-phosphate + phosphate. Its function is as follows. Catalyzes the phosphate monoester hydrolysis of phytic acid (myo-inositol hexakisphosphate), which results in the stepwise formation of myo-inositol pentakis-, tetrakis-, tris-, bis-, and monophosphates, as well as the liberation of inorganic phosphate. Myo-inositol 2-monophosphate is the end product. Responsible of about 25% of the phytase activity. The residual phytase activity might be contributed by other cytosolic or cellular enzymes such as acid phosphatase that also degraded the substrate phytate. Is essential for human tissue damage during infection. The chain is Phytase PHO112 (PHO112) from Candida albicans (strain SC5314 / ATCC MYA-2876) (Yeast).